Reading from the N-terminus, the 101-residue chain is UPF0358 protein EF_2458 (101 aa).

It belongs to the UPF0358 family.

The sequence is that of UPF0358 protein EF_2458 from Enterococcus faecalis (strain ATCC 700802 / V583).